We begin with the raw amino-acid sequence, 151 residues long: Cytochrome c-type biogenesis protein CcmE (151 aa).

Over 1–9 the chain is Cytoplasmic; sequence MKGLKKKRR. The chain crosses the membrane as a helical; Signal-anchor for type II membrane protein span at residues 10 to 30; it reads IQIIALAFVALAGSTALIGYA. The Periplasmic portion of the chain corresponds to 31-151; the sequence is MRDGINFFRS…FQHTEDQPQG (121 aa). Positions 123 and 127 each coordinate heme.

It belongs to the CcmE/CycJ family.

Its subcellular location is the cell inner membrane. Its function is as follows. Heme chaperone required for the biogenesis of c-type cytochromes. Transiently binds heme delivered by CcmC and transfers the heme to apo-cytochromes in a process facilitated by CcmF and CcmH. This chain is Cytochrome c-type biogenesis protein CcmE, found in Cereibacter sphaeroides (strain ATCC 17029 / ATH 2.4.9) (Rhodobacter sphaeroides).